The following is a 341-amino-acid chain: ATPase GET3 (341 aa).

ATP is bound at residue K34–T41. D63 is a catalytic residue. Residues E245 and N272 each coordinate ATP. Zn(2+) is bound by residues C283 and C286.

The protein belongs to the arsA ATPase family. In terms of assembly, homodimer.

It localises to the cytoplasm. The protein resides in the endoplasmic reticulum. Its function is as follows. ATPase required for the post-translational delivery of tail-anchored (TA) proteins to the endoplasmic reticulum. Recognizes and selectively binds the transmembrane domain of TA proteins in the cytosol. This complex then targets to the endoplasmic reticulum by membrane-bound receptors, where the tail-anchored protein is released for insertion. This process is regulated by ATP binding and hydrolysis. ATP binding drives the homodimer towards the closed dimer state, facilitating recognition of newly synthesized TA membrane proteins. ATP hydrolysis is required for insertion. Subsequently, the homodimer reverts towards the open dimer state, lowering its affinity for the membrane-bound receptor, and returning it to the cytosol to initiate a new round of targeting. The chain is ATPase GET3 from Ajellomyces dermatitidis (strain ER-3 / ATCC MYA-2586) (Blastomyces dermatitidis).